The chain runs to 108 residues: MPPKQQLSKAAKAAAALAGGKKSKKKWSKKSMKDRAQHAVILDQEKYDRILKEVPTYRYVSVSVLVDRLKIGGSLARIALRHLEKEGIIKPISKHSKQAIYTRATASE.

Over residues 1–20 (MPPKQQLSKAAKAAAALAGG) the composition is skewed to low complexity. The tract at residues 1 to 30 (MPPKQQLSKAAKAAAALAGGKKSKKKWSKK) is disordered. Residue P2 is modified to N,N-dimethylproline; by NTM1. Basic residues predominate over residues 21–30 (KKSKKKWSKK).

This sequence belongs to the eukaryotic ribosomal protein eS25 family. As to quaternary structure, component of the small ribosomal subunit (SSU). Mature yeast ribosomes consist of a small (40S) and a large (60S) subunit. The 40S small subunit contains 1 molecule of ribosomal RNA (18S rRNA) and 33 different proteins (encoded by 57 genes). The large 60S subunit contains 3 rRNA molecules (25S, 5.8S and 5S rRNA) and 46 different proteins (encoded by 81 genes).

The protein resides in the cytoplasm. Functionally, component of the ribosome, a large ribonucleoprotein complex responsible for the synthesis of proteins in the cell. The small ribosomal subunit (SSU) binds messenger RNAs (mRNAs) and translates the encoded message by selecting cognate aminoacyl-transfer RNA (tRNA) molecules. The large subunit (LSU) contains the ribosomal catalytic site termed the peptidyl transferase center (PTC), which catalyzes the formation of peptide bonds, thereby polymerizing the amino acids delivered by tRNAs into a polypeptide chain. The nascent polypeptides leave the ribosome through a tunnel in the LSU and interact with protein factors that function in enzymatic processing, targeting, and the membrane insertion of nascent chains at the exit of the ribosomal tunnel. The sequence is that of Small ribosomal subunit protein eS25A from Saccharomyces cerevisiae (strain ATCC 204508 / S288c) (Baker's yeast).